Consider the following 187-residue polypeptide: Chlorobenzene dioxygenase subunit beta (187 aa).

Belongs to the bacterial ring-hydroxylating dioxygenase beta subunit family. As to quaternary structure, this dioxygenase system consists of four proteins: the two subunits of the oxygenase component (TecA1 and TecA2), a ferredoxin (TecA3) and a ferredoxin reductase (TecA4).

The enzyme catalyses chlorobenzene + NADH + O2 + H(+) = (1R,2R)-3-chlorocyclohexa-3,5-diene-1,2-diol + NAD(+). The protein operates within aromatic compound metabolism. Functionally, part of the oxygenase component of the chlorobenzene dioxygenase system that catalyzes the dihydroxylation of a range of aromatic compounds, including chlorinated benzenes and toluenes, and dinuclear aromatics such as biphenyl and dibenzo-p-dioxin. The beta subunit is not directly involved in the control of substrate specificity. The sequence is that of Chlorobenzene dioxygenase subunit beta from Cupriavidus sp. (strain PS12).